The primary structure comprises 642 residues: Chaperone protein DnaK (642 aa).

At T200 the chain carries Phosphothreonine; by autocatalysis. Positions 600–616 (EAAQQSAGAAGPMPGAP) are enriched in low complexity. The tract at residues 600–642 (EAAQQSAGAAGPMPGAPAEEEPSDGPRKAKGRVVDAEIVDDDK) is disordered. Residues 623 to 634 (DGPRKAKGRVVD) are compositionally biased toward basic and acidic residues.

It belongs to the heat shock protein 70 family.

Acts as a chaperone. In Akkermansia muciniphila (strain ATCC BAA-835 / DSM 22959 / JCM 33894 / BCRC 81048 / CCUG 64013 / CIP 107961 / Muc), this protein is Chaperone protein DnaK.